The sequence spans 151 residues: UPF0178 protein Swoo_1444 (151 aa).

It belongs to the UPF0178 family.

The polypeptide is UPF0178 protein Swoo_1444 (Shewanella woodyi (strain ATCC 51908 / MS32)).